The chain runs to 473 residues: MKTLYSLRRFYPVETLFNGTLALAGRDQETTGFAWWAGNARLINLSGKLLGAHVAHAGLIVFWAGAMNLFEVAHFVPEKPMYEQGLILLPHLATLGWGVGPGGEVIDTFPYFVSGVLHLISSAVLGFGGIYHALLGPETLEESFPFFGYVWKDRNKMTTILGIHLILLGIGAFLLVFKALYFGGVYDTWAPGGGDVRKITNLTLSPSVIFGYLLKSPFGGEGWIVSVDDLEDIIGGHVWLGSICILGGIWHILTKPFAWARRAFVWSGEAYLSYSLGALAVFGFIACCFVWFNNTAYPSEFYGPTGPEASQAQAFTFLVRDQRLGANVGSAQGPTGLGKYLMRSPTGEVIFGGETMRFWDLRAPWLEPLRGPNGLDLSRLKKDIQPWQERRSAEYMTHAPLGSLNSVGGVATEINAVNYVSPRSWLATSHFVLGFFFFVGHLWHAGRARAAAAGFEKGIDRDLEPVLSMTPLN.

The propeptide occupies 1–14 (MKTLYSLRRFYPVE). Threonine 15 is subject to N-acetylthreonine. Phosphothreonine is present on threonine 15. Helical transmembrane passes span 69 to 93 (LFEVAHFVPEKPMYEQGLILLPHLA), 134 to 155 (LLGPETLEESFPFFGYVWKDRN), 178 to 200 (KALYFGGVYDTWAPGGGDVRKIT), 255 to 275 (KPFAWARRAFVWSGEAYLSYS), and 291 to 312 (WFNNTAYPSEFYGPTGPEASQA). A [CaMn4O5] cluster-binding site is contributed by glutamate 367. Residues 447–471 (RARAAAAGFEKGIDRDLEPVLSMTP) form a helical membrane-spanning segment.

It belongs to the PsbB/PsbC family. PsbC subfamily. In terms of assembly, PSII is composed of 1 copy each of membrane proteins PsbA, PsbB, PsbC, PsbD, PsbE, PsbF, PsbH, PsbI, PsbJ, PsbK, PsbL, PsbM, PsbT, PsbX, PsbY, PsbZ, Psb30/Ycf12, at least 3 peripheral proteins of the oxygen-evolving complex and a large number of cofactors. It forms dimeric complexes. Binds multiple chlorophylls and provides some of the ligands for the Ca-4Mn-5O cluster of the oxygen-evolving complex. It may also provide a ligand for a Cl- that is required for oxygen evolution. PSII binds additional chlorophylls, carotenoids and specific lipids. serves as cofactor.

It localises to the plastid. The protein localises to the chloroplast thylakoid membrane. Its function is as follows. One of the components of the core complex of photosystem II (PSII). It binds chlorophyll and helps catalyze the primary light-induced photochemical processes of PSII. PSII is a light-driven water:plastoquinone oxidoreductase, using light energy to abstract electrons from H(2)O, generating O(2) and a proton gradient subsequently used for ATP formation. The sequence is that of Photosystem II CP43 reaction center protein from Acorus calamus var. americanus (American sweet flag).